The sequence spans 488 residues: UDP-N-acetylmuramate--L-alanine ligase (488 aa).

Residue 127 to 133 (GTHGKTT) participates in ATP binding.

It belongs to the MurCDEF family.

The protein localises to the cytoplasm. It carries out the reaction UDP-N-acetyl-alpha-D-muramate + L-alanine + ATP = UDP-N-acetyl-alpha-D-muramoyl-L-alanine + ADP + phosphate + H(+). It functions in the pathway cell wall biogenesis; peptidoglycan biosynthesis. In terms of biological role, cell wall formation. The chain is UDP-N-acetylmuramate--L-alanine ligase from Shewanella baltica (strain OS223).